The primary structure comprises 287 residues: ATP synthase gamma chain (287 aa).

This sequence belongs to the ATPase gamma chain family. As to quaternary structure, F-type ATPases have 2 components, CF(1) - the catalytic core - and CF(0) - the membrane proton channel. CF(1) has five subunits: alpha(3), beta(3), gamma(1), delta(1), epsilon(1). CF(0) has three main subunits: a, b and c.

It is found in the cell inner membrane. Produces ATP from ADP in the presence of a proton gradient across the membrane. The gamma chain is believed to be important in regulating ATPase activity and the flow of protons through the CF(0) complex. The sequence is that of ATP synthase gamma chain from Salmonella agona (strain SL483).